The primary structure comprises 859 residues: Glucans biosynthesis glucosyltransferase H (859 aa).

6 helical membrane passes run 144-166 (YILL…GILP), 200-222 (LLLF…MGFL), 523-545 (VMSY…LLAV), 573-595 (VALF…ILIW), 608-630 (VTVS…MLFH), and 684-706 (SFLW…SVIS).

It belongs to the glycosyltransferase 2 family. OpgH subfamily.

It localises to the cell inner membrane. Its pathway is glycan metabolism; osmoregulated periplasmic glucan (OPG) biosynthesis. Functionally, involved in the biosynthesis of osmoregulated periplasmic glucans (OPGs). The polypeptide is Glucans biosynthesis glucosyltransferase H (Pseudomonas syringae pv. tomato (strain ATCC BAA-871 / DC3000)).